The following is a 274-amino-acid chain: Phosphate import ATP-binding protein PstB (274 aa).

The segment covering M1–P11 has biased composition (polar residues). The segment at M1–Q21 is disordered. The ABC transporter domain maps to V28–I269. An ATP-binding site is contributed by G60–S67.

Belongs to the ABC transporter superfamily. Phosphate importer (TC 3.A.1.7) family. In terms of assembly, the complex is composed of two ATP-binding proteins (PstB), two transmembrane proteins (PstC and PstA) and a solute-binding protein (PstS).

The protein localises to the cell inner membrane. It carries out the reaction phosphate(out) + ATP + H2O = ADP + 2 phosphate(in) + H(+). Part of the ABC transporter complex PstSACB involved in phosphate import. Responsible for energy coupling to the transport system. In Rhodopseudomonas palustris (strain BisB5), this protein is Phosphate import ATP-binding protein PstB.